Consider the following 186-residue polypeptide: Probable nicotinate-nucleotide adenylyltransferase (186 aa).

Belongs to the NadD family.

It carries out the reaction nicotinate beta-D-ribonucleotide + ATP + H(+) = deamido-NAD(+) + diphosphate. The protein operates within cofactor biosynthesis; NAD(+) biosynthesis; deamido-NAD(+) from nicotinate D-ribonucleotide: step 1/1. In terms of biological role, catalyzes the reversible adenylation of nicotinate mononucleotide (NaMN) to nicotinic acid adenine dinucleotide (NaAD). In Tropheryma whipplei (strain Twist) (Whipple's bacillus), this protein is Probable nicotinate-nucleotide adenylyltransferase.